A 215-amino-acid chain; its full sequence is UPF0502 protein YceH (215 aa).

Residue Lys-80 is modified to N6-acetyllysine.

The protein belongs to the UPF0502 family.

This Escherichia coli O45:K1 (strain S88 / ExPEC) protein is UPF0502 protein YceH.